The chain runs to 92 residues: Small ribosomal subunit protein uS19 (92 aa).

It belongs to the universal ribosomal protein uS19 family.

In terms of biological role, protein S19 forms a complex with S13 that binds strongly to the 16S ribosomal RNA. The chain is Small ribosomal subunit protein uS19 from Klebsiella pneumoniae (strain 342).